The sequence spans 199 residues: NADH-quinone oxidoreductase subunit C (199 aa).

The protein belongs to the complex I 30 kDa subunit family. NDH-1 is composed of 14 different subunits. Subunits NuoB, C, D, E, F, and G constitute the peripheral sector of the complex.

It localises to the cell membrane. It carries out the reaction a quinone + NADH + 5 H(+)(in) = a quinol + NAD(+) + 4 H(+)(out). In terms of biological role, NDH-1 shuttles electrons from NADH, via FMN and iron-sulfur (Fe-S) centers, to quinones in the respiratory chain. The immediate electron acceptor for the enzyme in this species is believed to be ubiquinone. Couples the redox reaction to proton translocation (for every two electrons transferred, four hydrogen ions are translocated across the cytoplasmic membrane), and thus conserves the redox energy in a proton gradient. In Polynucleobacter asymbioticus (strain DSM 18221 / CIP 109841 / QLW-P1DMWA-1) (Polynucleobacter necessarius subsp. asymbioticus), this protein is NADH-quinone oxidoreductase subunit C.